A 354-amino-acid chain; its full sequence is Methionine import ATP-binding protein MetN (354 aa).

In terms of domain architecture, ABC transporter spans 8-250; that stretch reads LDHIDITFRQ…PKEALTQEFI (243 aa). Residue 42 to 49 participates in ATP binding; it reads GYSGAGKS.

Belongs to the ABC transporter superfamily. Methionine importer (TC 3.A.1.24) family. In terms of assembly, the complex is composed of two ATP-binding proteins (MetN), two transmembrane proteins (MetI) and a solute-binding protein (MetQ).

The protein localises to the cell membrane. The enzyme catalyses L-methionine(out) + ATP + H2O = L-methionine(in) + ADP + phosphate + H(+). It catalyses the reaction D-methionine(out) + ATP + H2O = D-methionine(in) + ADP + phosphate + H(+). Part of the ABC transporter complex MetNIQ involved in methionine import. Responsible for energy coupling to the transport system. The chain is Methionine import ATP-binding protein MetN from Streptococcus pyogenes serotype M2 (strain MGAS10270).